The following is a 225-amino-acid chain: Urease accessory protein UreF (225 aa).

The protein belongs to the UreF family. In terms of assembly, ureD, UreF and UreG form a complex that acts as a GTP-hydrolysis-dependent molecular chaperone, activating the urease apoprotein by helping to assemble the nickel containing metallocenter of UreC. The UreE protein probably delivers the nickel.

The protein resides in the cytoplasm. In terms of biological role, required for maturation of urease via the functional incorporation of the urease nickel metallocenter. The sequence is that of Urease accessory protein UreF from Arthrobacter sp. (strain FB24).